Consider the following 324-residue polypeptide: Granaticin polyketide synthase bifunctional cyclase/dehydratase (324 aa).

The tract at residues 1–21 is disordered; that stretch reads MVQPAATPVSLPSPTVHRSEH.

The protein operates within antibiotic biosynthesis; granaticin biosynthesis. Functionally, is needed for correct cyclization of the oligoketide leading to isochromanequinone formation. This is Granaticin polyketide synthase bifunctional cyclase/dehydratase (gra-orf4) from Streptomyces violaceoruber.